We begin with the raw amino-acid sequence, 295 residues long: Elongation factor Ts (295 aa).

The segment at 79 to 82 is involved in Mg(2+) ion dislocation from EF-Tu; sequence TDFV.

This sequence belongs to the EF-Ts family.

It localises to the cytoplasm. Associates with the EF-Tu.GDP complex and induces the exchange of GDP to GTP. It remains bound to the aminoacyl-tRNA.EF-Tu.GTP complex up to the GTP hydrolysis stage on the ribosome. This is Elongation factor Ts from Bacillus cereus (strain ATCC 10987 / NRS 248).